A 285-amino-acid polypeptide reads, in one-letter code: Gap junction Cx32.2 protein (285 aa).

Over 2–19 (GDLGFLSKLLDQVQSHST) the chain is Cytoplasmic. Residues 20–40 (VIGKIWMTVLFLFRIMVLGAG) traverse the membrane as a helical segment. Over 41–76 (AESVWGDEQSDFTCNTQQPGCENVCYDWTFPISHIR) the chain is Extracellular. The chain crosses the membrane as a helical span at residues 77–99 (FWVLQIIFVSTPTLIYLGHAMHI). Topologically, residues 100-148 (IQQETKLRARLSSPGGSRLCKQPKYTNEQGKVKIKGNLLGSYLTQLVFK) are cytoplasmic. The chain crosses the membrane as a helical span at residues 149–171 (IIIEAAFIVGQYYLYGFIMVPMF). Over 172-194 (PCSKKPCPFTVECYMSRPTEKTI) the chain is Extracellular. Residues 195-217 (FIIFMLVVACVSLLLNVIEVFYL) traverse the membrane as a helical segment. The Cytoplasmic portion of the chain corresponds to 218-285 (ICTRVRCGSR…AKEEKRLLSH (68 aa)). Residues 264-285 (ETSQSIGGSLDGAKEEKRLLSH) are disordered. Over residues 275-285 (GAKEEKRLLSH) the composition is skewed to basic and acidic residues.

Belongs to the connexin family. Beta-type (group I) subfamily. As to quaternary structure, a connexon is composed of a hexamer of connexins.

It localises to the cell membrane. It is found in the cell junction. Its subcellular location is the gap junction. Its function is as follows. One gap junction consists of a cluster of closely packed pairs of transmembrane channels, the connexons, through which materials of low MW diffuse from one cell to a neighboring cell. May be involved in ovarian follicular maturation. The sequence is that of Gap junction Cx32.2 protein from Micropogonias undulatus (Atlantic croaker).